Consider the following 80-residue polypeptide: Pigment-dispersing hormone type 2 (80 aa).

The first 23 residues, 1 to 23 (MARCFVVLAFLALAAMSLQVATA), serve as a signal peptide directing secretion. Alanine amide is present on Ala-77.

The protein belongs to the arthropod PDH family. Eyestalk.

It is found in the secreted. In terms of biological role, the pigment-dispersing hormone causes the migration of the distal retinal pigment into the proximal end of the pigment chromatophore cells and thus decreases the amount of light entering the retinulas. May also function as a neurotransmitter and/or neuromodulator. This Penaeus vannamei (Whiteleg shrimp) protein is Pigment-dispersing hormone type 2 (PDH2).